The primary structure comprises 383 residues: Acetylornithine deacetylase (383 aa).

His-80 contributes to the Zn(2+) binding site. Asp-82 is a catalytic residue. Zn(2+) is bound at residue Asp-112. The active site involves Glu-144. Glu-145, Glu-169, and His-355 together coordinate Zn(2+).

The protein belongs to the peptidase M20A family. ArgE subfamily. In terms of assembly, homodimer. It depends on Zn(2+) as a cofactor. Requires Co(2+) as cofactor. The cofactor is glutathione.

The protein localises to the cytoplasm. It catalyses the reaction N(2)-acetyl-L-ornithine + H2O = L-ornithine + acetate. The protein operates within amino-acid biosynthesis; L-arginine biosynthesis; L-ornithine from N(2)-acetyl-L-ornithine (linear): step 1/1. Its function is as follows. Catalyzes the hydrolysis of the amide bond of N(2)-acetylated L-amino acids. Cleaves the acetyl group from N-acetyl-L-ornithine to form L-ornithine, an intermediate in L-arginine biosynthesis pathway, and a branchpoint in the synthesis of polyamines. The chain is Acetylornithine deacetylase from Pectobacterium atrosepticum (strain SCRI 1043 / ATCC BAA-672) (Erwinia carotovora subsp. atroseptica).